The chain runs to 200 residues: Small ribosomal subunit protein eS8A (200 aa).

Disordered regions lie at residues methionine 1 to proline 40 and serine 123 to alanine 145. Basic residues predominate over residues lysine 135 to alanine 145.

The protein belongs to the eukaryotic ribosomal protein eS8 family. In terms of assembly, component of the small ribosomal subunit (SSU). Mature yeast ribosomes consist of a small (40S) and a large (60S) subunit. The 40S small subunit contains 1 molecule of ribosomal RNA (18S rRNA) and at least 33 different proteins. The large 60S subunit contains 3 rRNA molecules (25S, 5.8S and 5S rRNA) and at least 46 different proteins.

The protein localises to the cytoplasm. Functionally, component of the ribosome, a large ribonucleoprotein complex responsible for the synthesis of proteins in the cell. The small ribosomal subunit (SSU) binds messenger RNAs (mRNAs) and translates the encoded message by selecting cognate aminoacyl-transfer RNA (tRNA) molecules. The large subunit (LSU) contains the ribosomal catalytic site termed the peptidyl transferase center (PTC), which catalyzes the formation of peptide bonds, thereby polymerizing the amino acids delivered by tRNAs into a polypeptide chain. The nascent polypeptides leave the ribosome through a tunnel in the LSU and interact with protein factors that function in enzymatic processing, targeting, and the membrane insertion of nascent chains at the exit of the ribosomal tunnel. The polypeptide is Small ribosomal subunit protein eS8A (rps801) (Schizosaccharomyces pombe (strain 972 / ATCC 24843) (Fission yeast)).